We begin with the raw amino-acid sequence, 318 residues long: Carnitine monooxygenase reductase subunit (318 aa).

The 103-residue stretch at 5–107 (YEMFPAVVTR…SEPKNLFPLA (103 aa)) folds into the FAD-binding FR-type domain. A 2Fe-2S ferredoxin-type domain is found at 233–318 (FTVVLAKSNQ…AKGKKLVLDL (86 aa)). 4 residues coordinate [2Fe-2S] cluster: Cys267, Cys272, Cys275, and Cys305.

Belongs to the PDR/VanB family. CntB subfamily. As to quaternary structure, composed of an oxygenase subunit (cntA) and a reductase subunit (cntB). The cofactor is FMN. [2Fe-2S] cluster is required as a cofactor.

The catalysed reaction is (R)-carnitine + NADH + O2 + H(+) = (3R)-3-hydroxy-4-oxobutanoate + trimethylamine + NAD(+) + H2O. It carries out the reaction (R)-carnitine + NADPH + O2 + H(+) = (3R)-3-hydroxy-4-oxobutanoate + trimethylamine + NADP(+) + H2O. It functions in the pathway amine and polyamine metabolism; carnitine metabolism. Functionally, converts carnitine to trimethylamine and malic semialdehyde. The chain is Carnitine monooxygenase reductase subunit from Acinetobacter baumannii (strain ATCC 19606 / DSM 30007 / JCM 6841 / CCUG 19606 / CIP 70.34 / NBRC 109757 / NCIMB 12457 / NCTC 12156 / 81).